The following is a 528-amino-acid chain: Oxamate amidohydrolase proenzyme (528 aa).

Thr342 functions as the Nucleophile in the catalytic mechanism. A substrate-binding site is contributed by 424 to 425 (GG).

The protein belongs to the gamma-glutamyltransferase family. As to quaternary structure, heterodimer that consists of a 35.5 kDa large (alpha) subunit and a 20 kDa small (beta) subunit, which are synthesized from a single polypeptide. Post-translationally, cleaved by autocatalysis into a large (alpha) and a small (beta) subunit.

The catalysed reaction is oxamate + H2O = oxalate + NH4(+). In terms of biological role, involved in the uric acid degradation pathway. Catalyzes the conversion of oxamate to oxalate. This Klebsiella pneumoniae subsp. pneumoniae (strain ATCC 700721 / MGH 78578) protein is Oxamate amidohydrolase proenzyme.